Reading from the N-terminus, the 547-residue chain is Chaperonin GroEL (547 aa).

ATP-binding positions include threonine 30 to proline 33, lysine 51, aspartate 87 to threonine 91, glycine 415, asparagine 479 to alanine 481, and aspartate 495.

This sequence belongs to the chaperonin (HSP60) family. As to quaternary structure, forms a cylinder of 14 subunits composed of two heptameric rings stacked back-to-back. Interacts with the co-chaperonin GroES.

It localises to the cytoplasm. The enzyme catalyses ATP + H2O + a folded polypeptide = ADP + phosphate + an unfolded polypeptide.. Its function is as follows. Together with its co-chaperonin GroES, plays an essential role in assisting protein folding. The GroEL-GroES system forms a nano-cage that allows encapsulation of the non-native substrate proteins and provides a physical environment optimized to promote and accelerate protein folding. This is Chaperonin GroEL from Pseudomonas syringae pv. syringae (strain B728a).